We begin with the raw amino-acid sequence, 692 residues long: Follicle-stimulating hormone receptor (692 aa).

Positions 1 to 17 (MALLLVSLLAFLGSGSG) are cleaved as a signal peptide. 2 cysteine pairs are disulfide-bonded: C18-C25 and C23-C32. Residues 18–46 (CHHWLCHCSNRVFLCQDSKVTEIPPDLPR) enclose the LRRNT domain. Over 18–365 (CHHWLCHCSN…EDIMGYNILR (348 aa)) the chain is Extracellular. 9 LRR repeats span residues 49–72 (IELRFVLTKLRVIPKGSFSGFGDL), 73–97 (EKIEISQNDVLEVIEADVFSNLPNL), 98–118 (HEIRIEKANNLLYINPEAFQN), 119–143 (LPSLRYLLISNTGIKHLPAFHKIQS), 144–169 (LQKVLLDIQDNINIHIIARNSFMGLS), 170–192 (FESVILWLNKNGIQEIHNCAFNG), 193–216 (TQLDELNLSDNNNLEELPDDVFQG), 217–240 (ASGPVVLDISRTKVYSLPNHGLEN), and 241–259 (LKKLRARSTYRLKKLPSLD). 2 N-linked (GlcNAc...) asparagine glycosylation sites follow: N191 and N199. 4 disulfides stabilise this stretch: C275-C345, C276-C292, C276-C355, and C292-C337. N293 carries an N-linked (GlcNAc...) asparagine glycan. Sulfotyrosine is present on Y334. A helical membrane pass occupies residues 366–386 (VLIWFISILAITGNTTVLVVL). Residues 387-397 (TTSQYKLTVPR) are Cytoplasmic-facing. A helical membrane pass occupies residues 398–420 (FLMCNLAFADLCIGIYLLLIASV). Over 421 to 442 (DIHTKSQYHNYAIDWQTGAGCD) the chain is Extracellular. Cysteines 441 and 516 form a disulfide. A helical membrane pass occupies residues 443-464 (AAGFFTVFASELSVYTLAAITL). Residues 465-484 (ERWHTITHAMQLECKVQLCH) lie on the Cytoplasmic side of the membrane. Residues 485–507 (AASIMVLGWAFAFAAALFPIFGI) traverse the membrane as a helical segment. The Extracellular segment spans residues 508-527 (SSYMKVSICLPMDIDSPLSQ). A helical membrane pass occupies residues 528–549 (LYVMALLVLNALAFVVICGCYT). At 550-572 (HIYLTVRNPNIVSSSRDTKIAKR) the chain is on the cytoplasmic side. A helical transmembrane segment spans residues 573–596 (MATLIFTDFLCMAPILFFAISASL). The Extracellular portion of the chain corresponds to 597 to 607 (KVPLITVSKAK). A helical transmembrane segment spans residues 608–629 (ILLVLFYPINSCANPFLYAIFT). Topologically, residues 630–692 (KNFRRDFFVL…LVPLNHSVQN (63 aa)) are cytoplasmic.

It belongs to the G-protein coupled receptor 1 family. FSH/LSH/TSH subfamily. As to quaternary structure, homotrimer. Functions as a homotrimer binding the FSH hormone heterodimer composed of CGA and FSHB. Interacts with ARRB2. Interacts with APPL2; interaction is independent of follicle stimulating hormone stimulation. Post-translationally, N-glycosylated; indirectly required for FSH-binding, possibly via a conformational change that allows high affinity binding of hormone. In terms of processing, sulfated.

The protein resides in the cell membrane. Functionally, g protein-coupled receptor for follitropin, the follicle-stimulating hormone. Through cAMP production activates the downstream PI3K-AKT and ERK1/ERK2 signaling pathways. This Mus musculus (Mouse) protein is Follicle-stimulating hormone receptor (Fshr).